Consider the following 683-residue polypeptide: Inositol-trisphosphate 3-kinase C (683 aa).

Residues 1–124 are disordered; sequence MRRCPCRGSL…PDRSSLRTHL (124 aa). Over residues 13-22 the composition is skewed to low complexity; the sequence is AEAGALPAAA. Residues 44-58 show a composition bias toward gly residues; it reads PGAGAPAGRPEGGGP. A compositionally biased stretch (basic and acidic residues) spans 105–124; that stretch reads ETERPKQKTEPDRSSLRTHL. 2 positions are modified to phosphoserine: serine 127 and serine 162. The tract at residues 147–308 is disordered; the sequence is TDPHRSDLQF…EDGPLEEPEP (162 aa). The segment covering 196 to 206 has biased composition (polar residues); it reads WTHQNSSSLQT. The segment covering 249–259 has biased composition (basic and acidic residues); the sequence is SQKKQDTEAAR. Polar residues predominate over residues 267 to 289; sequence FQIQQDTDGSWTQPSTDGSQTAP. Acidic residues predominate over residues 297 to 308; that stretch reads EPEDGPLEEPEP. The Nuclear export signal motif lies at 324 to 332; it reads LCPVPRLII. Residues 334-387 are disordered; that stretch reads PETPEPEAQPVGPPSRVEGGSGGFSSASSFDESEDDVVAGGGGASDPEDRSGSK. Threonine 336 is modified (phosphothreonine). Serine 404 carries the post-translational modification Phosphoserine. Residues lysine 431, 471 to 473, and aspartate 484 each bind ATP; that span reads EDL. Substrate contacts are provided by residues lysine 486, 507-513, and 534-541; these read RKDMYEK and KPRYMQWR. The segment at 509–517 is calmodulin-binding; sequence DMYEKMVAV. ATP is bound by residues lysine 558 and aspartate 638. Lysine 641 lines the substrate pocket.

Belongs to the inositol phosphokinase (IPK) family. In terms of tissue distribution, highly expressed in pancreas, skeletal muscle, liver, placenta and weakly in kidney and brain.

The protein localises to the nucleus. The protein resides in the cytoplasm. The enzyme catalyses 1D-myo-inositol 1,4,5-trisphosphate + ATP = 1D-myo-inositol 1,3,4,5-tetrakisphosphate + ADP + H(+). Its activity is regulated as follows. Activated by calcium/calmodulin. Inhibited by high concentrations of the substrate Ins(1,2,4)P3, and allosterically activated by the product Ins(1,3,4,5)P4. Catalyzes the phosphorylation of 1D-myo-inositol 1,4,5-trisphosphate (InsP3) into 1D-myo-inositol 1,3,4,5-tetrakisphosphate and participates to the regulation of calcium homeostasis. Can phosphorylate inositol 2,4,5-triphosphate to inositol 2,4,5,6-tetraphosphate. In Homo sapiens (Human), this protein is Inositol-trisphosphate 3-kinase C.